The sequence spans 394 residues: RNA binding protein fox-1 homolog 2 (394 aa).

Disordered stretches follow at residues 1 to 70 (MGRL…DYAG) and 83 to 135 (TQAH…HVSN). 2 stretches are compositionally biased toward polar residues: residues 24–36 (RDSQGNQEPTTTP) and 83–103 (TQAHGEQSSNSPSTQNGSLTT). Over residues 105-125 (GGAQTDGQQSQTQSSENSESK) the composition is skewed to low complexity. The region spanning 129 to 205 (KRLHVSNIPF…RKIEVNNATA (77 aa)) is the RRM domain. Position 285 is an omega-N-methylarginine (R285). An asymmetric dimethylarginine mark is found at R301 and R333. Asymmetric dimethylarginine; alternate occurs at positions 385 and 390. Omega-N-methylarginine; alternate occurs at positions 385 and 390.

In terms of assembly, interacts with ER-alpha N-terminal activation domain. Interacts with RBPMS; the interaction allows cooperative assembly of stable cell-specific alternative splicing regulatory complexes.

The protein localises to the nucleus. It is found in the cytoplasm. In terms of biological role, RNA-binding protein that regulates alternative splicing events by binding to 5'-UGCAUGU-3' elements. Prevents binding of U2AF2 to the 3'-splice site. Regulates alternative splicing of tissue-specific exons and of differentially spliced exons during erythropoiesis. Seems to act as a coregulatory factor of ER-alpha. Together with RNA binding proteins RBPMS and MBNL1/2, activates vascular smooth muscle cells alternative splicing events. This is RNA binding protein fox-1 homolog 2 (RBFOX2) from Bos taurus (Bovine).